Consider the following 355-residue polypeptide: Probable nitronate monooxygenase (355 aa).

Residues N71, Q175, G180, G219, and Q238–T241 each bind FMN.

Belongs to the nitronate monooxygenase family. NMO class I subfamily. It depends on FMN as a cofactor.

The catalysed reaction is 3 propionate 3-nitronate + 3 O2 + H2O = 3 3-oxopropanoate + 2 nitrate + nitrite + H2O2 + 3 H(+). Its function is as follows. Nitronate monooxygenase that uses molecular oxygen to catalyze the oxidative denitrification of alkyl nitronates. Acts on propionate 3-nitronate (P3N), the presumed physiological substrate. Probably functions in the detoxification of P3N, a metabolic poison produced by plants and fungi as a defense mechanism. This chain is Probable nitronate monooxygenase, found in Staphylococcus saprophyticus subsp. saprophyticus (strain ATCC 15305 / DSM 20229 / NCIMB 8711 / NCTC 7292 / S-41).